Reading from the N-terminus, the 257-residue chain is Beta-fibrinogenase mucrofibrase-3 (257 aa).

The first 18 residues, 1 to 18 (MVLIRVLANLLILQLSYA), serve as a signal peptide directing secretion. The propeptide occupies 19–24 (QKSSEL). The Peptidase S1 domain maps to 25-248 (VIGGDECNIN…HLDWIKGIIA (224 aa)). Disulfide bonds link cysteine 31–cysteine 162, cysteine 49–cysteine 65, cysteine 97–cysteine 255, cysteine 141–cysteine 209, cysteine 173–cysteine 188, and cysteine 199–cysteine 224. Active-site charge relay system residues include histidine 64 and aspartate 109. The Charge relay system role is filled by serine 203.

The protein belongs to the peptidase S1 family. Snake venom subfamily. As to quaternary structure, monomer. As to expression, expressed by the venom gland.

The protein resides in the secreted. Functionally, snake venom serine protease with fibrinogenolytic activities. Cleaves beta-chain of fibrinogen (FGB) efficiently and shows relatively lower activity on alpha-chain. The chain is Beta-fibrinogenase mucrofibrase-3 from Protobothrops mucrosquamatus (Taiwan habu).